The following is a 97-amino-acid chain: Large ribosomal subunit protein bL27 (97 aa).

Residues 1 to 21 (MAHKKGVGSSRNGRDSNPKYR) form a disordered region.

This sequence belongs to the bacterial ribosomal protein bL27 family.

The polypeptide is Large ribosomal subunit protein bL27 (Gemmatimonas aurantiaca (strain DSM 14586 / JCM 11422 / NBRC 100505 / T-27)).